The primary structure comprises 450 residues: Interferon regulatory factor 4 (450 aa).

A DNA-binding region (IRF tryptophan pentad repeat) is located at residues 21-129 (NGKLRQWLID…DPYKVYRIVP (109 aa)). A phosphoserine; by ROCK2 mark is found at serine 446 and serine 447.

It belongs to the IRF family. In terms of assembly, interacts with SPIB and DEF6. Interacts with the BATF-JUNB heterodimer. Interacts with BATF (via bZIP domain); the interaction is direct. Directly interacts with NLRP3 in the nucleus of Th2 cells; this interaction enhances IRF4 ability to bind to the IL4 promoter and is required for optimal IRF4-dependent IL4 transcription. Interacts with SPI1. In terms of processing, phosphorylation by ROCK2 regulates IL-17 and IL-21 production. In terms of tissue distribution, lymphoid cells.

The protein resides in the nucleus. Its subcellular location is the cytoplasm. Transcriptional activator. Binds to the interferon-stimulated response element (ISRE) of the MHC class I promoter. Binds the immunoglobulin lambda light chain enhancer, together with PU.1. Probably plays a role in ISRE-targeted signal transduction mechanisms specific to lymphoid cells. Involved in CD8(+) dendritic cell differentiation by forming a complex with the BATF-JUNB heterodimer in immune cells, leading to recognition of AICE sequence (5'-TGAnTCA/GAAA-3'), an immune-specific regulatory element, followed by cooperative binding of BATF and IRF4 and activation of genes. The chain is Interferon regulatory factor 4 from Mus musculus (Mouse).